Consider the following 136-residue polypeptide: Nuclear receptor 2C2-associated protein (136 aa).

It belongs to the NR2C2AP family.

It is found in the nucleus. Functionally, may act as a repressor of nr2c2-mediated transactivation by suppressing the binding between nr2c2 and its response element in target genes. This Xenopus tropicalis (Western clawed frog) protein is Nuclear receptor 2C2-associated protein (nr2c2ap).